Consider the following 330-residue polypeptide: Glycerol-3-phosphate dehydrogenase [NAD(P)+] (330 aa).

The NADPH site is built by S10, W11, R31, and K105. The sn-glycerol 3-phosphate site is built by K105, G135, and S137. A139 contributes to the NADPH binding site. K190, D243, S253, R254, and N255 together coordinate sn-glycerol 3-phosphate. K190 acts as the Proton acceptor in catalysis. An NADPH-binding site is contributed by R254. NADPH-binding residues include V278 and E280.

Belongs to the NAD-dependent glycerol-3-phosphate dehydrogenase family.

The protein localises to the cytoplasm. The catalysed reaction is sn-glycerol 3-phosphate + NAD(+) = dihydroxyacetone phosphate + NADH + H(+). It catalyses the reaction sn-glycerol 3-phosphate + NADP(+) = dihydroxyacetone phosphate + NADPH + H(+). The protein operates within membrane lipid metabolism; glycerophospholipid metabolism. Catalyzes the reduction of the glycolytic intermediate dihydroxyacetone phosphate (DHAP) to sn-glycerol 3-phosphate (G3P), the key precursor for phospholipid synthesis. In Oleidesulfovibrio alaskensis (strain ATCC BAA-1058 / DSM 17464 / G20) (Desulfovibrio alaskensis), this protein is Glycerol-3-phosphate dehydrogenase [NAD(P)+].